Consider the following 104-residue polypeptide: Nucleoid-associated protein LSL_1227 (104 aa).

Low complexity predominate over residues 1–19 (MMMRGMNMQSMMKQMQKLQ). The disordered stretch occupies residues 1–24 (MMMRGMNMQSMMKQMQKLQKNMKK).

This sequence belongs to the YbaB/EbfC family. Homodimer.

It is found in the cytoplasm. It localises to the nucleoid. Its function is as follows. Binds to DNA and alters its conformation. May be involved in regulation of gene expression, nucleoid organization and DNA protection. The protein is Nucleoid-associated protein LSL_1227 of Ligilactobacillus salivarius (strain UCC118) (Lactobacillus salivarius).